The chain runs to 249 residues: Triosephosphate isomerase (249 aa).

Asn9 to Lys11 contacts substrate. Catalysis depends on His94, which acts as the Electrophile. Glu166 (proton acceptor) is an active-site residue. Residues Gly172 and Gly232–Gly233 contribute to the substrate site.

Belongs to the triosephosphate isomerase family. As to quaternary structure, homodimer.

The protein resides in the cytoplasm. The catalysed reaction is D-glyceraldehyde 3-phosphate = dihydroxyacetone phosphate. The protein operates within carbohydrate biosynthesis; gluconeogenesis. Its pathway is carbohydrate degradation; glycolysis; D-glyceraldehyde 3-phosphate from glycerone phosphate: step 1/1. In terms of biological role, involved in the gluconeogenesis. Catalyzes stereospecifically the conversion of dihydroxyacetone phosphate (DHAP) to D-glyceraldehyde-3-phosphate (G3P). This chain is Triosephosphate isomerase, found in Xylella fastidiosa (strain M23).